A 598-amino-acid polypeptide reads, in one-letter code: NADH-ubiquinone oxidoreductase chain 5 (598 aa).

16 helical membrane passes run 1–21, 28–48, 81–101, 115–135, 171–191, 193–213, 233–253, 265–285, 293–312, 323–343, 362–382, 399–421, 454–474, 480–500, 509–529, and 576–596; these read MLELWGVLSLTSLGVMVIFLF, FAESVKYAGYMNAVLLSILLM, CFFVVGLYVTWNILMFSFYYM, GLFLIAMLLLVSAESLFQLLI, GDIGLLIMLMWSLVTLGDWSF, GLYALDFVNTFFLLGVVLAAA, TPVSSLLHSSTMVVAGVFLLI, IQLMVFFLGTMTTLFSAICAL, VVAFSTASQLGLMVTAVGAG, MHAFFKAMLFMCSGSFIHGLQ, SVCFFIGSAALMGVPFLAGFF, WAVGLVLIATSFTAAYSVRLLYF, VIAGVVFIYFLSPNQISCLSL, LAAVFVTLVGGLIAWDVVNLL, IPELAFEAQVGFYPLIMHKLI, and LIKMYIAVMVMMGGLILGIMI.

It belongs to the complex I subunit 5 family.

The protein localises to the mitochondrion inner membrane. The catalysed reaction is a ubiquinone + NADH + 5 H(+)(in) = a ubiquinol + NAD(+) + 4 H(+)(out). Its function is as follows. Core subunit of the mitochondrial membrane respiratory chain NADH dehydrogenase (Complex I) that is believed to belong to the minimal assembly required for catalysis. Complex I functions in the transfer of electrons from NADH to the respiratory chain. The immediate electron acceptor for the enzyme is believed to be ubiquinone. This is NADH-ubiquinone oxidoreductase chain 5 (ND5) from Branchiostoma lanceolatum (Common lancelet).